Here is a 217-residue protein sequence, read N- to C-terminus: Large ribosomal subunit protein uL4 (217 aa).

The segment at K46–R102 is disordered.

Belongs to the universal ribosomal protein uL4 family. In terms of assembly, part of the 50S ribosomal subunit.

Functionally, one of the primary rRNA binding proteins, this protein initially binds near the 5'-end of the 23S rRNA. It is important during the early stages of 50S assembly. It makes multiple contacts with different domains of the 23S rRNA in the assembled 50S subunit and ribosome. Forms part of the polypeptide exit tunnel. This Corynebacterium diphtheriae (strain ATCC 700971 / NCTC 13129 / Biotype gravis) protein is Large ribosomal subunit protein uL4.